Reading from the N-terminus, the 157-residue chain is Cytochrome c-type biogenesis protein CcmE (157 aa).

Residues 1-8 (MNPLRRKR) lie on the Cytoplasmic side of the membrane. Residues 9 to 29 (LLIILAVLGGVGLALTLALSA) traverse the membrane as a helical; Signal-anchor for type II membrane protein segment. The Periplasmic portion of the chain corresponds to 30–157 (LKENINLFYT…ASMPARQADR (128 aa)). Heme-binding residues include His124 and Tyr128. Residues 132-157 (EVSKALRESGQATPAPASMPARQADR) are disordered.

Belongs to the CcmE/CycJ family.

The protein localises to the cell inner membrane. Functionally, heme chaperone required for the biogenesis of c-type cytochromes. Transiently binds heme delivered by CcmC and transfers the heme to apo-cytochromes in a process facilitated by CcmF and CcmH. The chain is Cytochrome c-type biogenesis protein CcmE from Pseudomonas syringae pv. tomato (strain ATCC BAA-871 / DC3000).